We begin with the raw amino-acid sequence, 141 residues long: MQYAKPVTLNVEECDRLSFLPYLFGNDFLYAEAYVYALAQKMMPEYQGGFWHFIRLPDGGGYMMPDGDRFHLVNGENWFDRTVSADAAGIILTSLVINRQLWLYHDSGDVGLTQLYRMRDAQLWRHIEFHPECNAIYAALD.

This sequence belongs to the antirestriction protein family.

The polypeptide is Putative antirestriction protein YubI (yubI) (Escherichia coli (strain K12)).